The chain runs to 189 residues: Protein CURLY FLAG LEAF 1 (189 aa).

The short motif at 50–55 (TLELNS) is the EAR element. Residues 57–91 (LSLPCHWEQCLDLKTGEIYYINWKNGMRVKEDPRK) form the WW domain. The segment at 90–148 (RKVMNADPDSGDSYGTVCSEEDSSYYDSEESSSESSPSSRENHKEEEEEEEEEEEEEED) is disordered. 2 stretches are compositionally biased toward acidic residues: residues 108-121 (SEED…EESS) and 135-148 (EEEE…EEED).

Interacts with BHLH122/CFLAP1 and BHLH80/CFLAP2. Binds to HDG1. As to expression, mostly observed in roots, flowers and siliques. Expressed in cells differentiated from epidermal cells such as trichomes, stigmatic papillar cells and guard cells, as well as in tissues undergoing abscission and dehiscence.

In terms of biological role, negatively regulates the cuticle development by interacting with the HD-ZIP IV transcription factor HDG1. In Arabidopsis thaliana (Mouse-ear cress), this protein is Protein CURLY FLAG LEAF 1.